Reading from the N-terminus, the 335-residue chain is Twinfilin (335 aa).

2 consecutive ADF-H domains span residues 4 to 140 and 176 to 316; these read SSGI…QHKL and GISF…NELH. Residues 307–335 form a disordered region; the sequence is SEESIINELHPPKVEEKKAFSKPSRPGRK. Positions 316 to 325 are enriched in basic and acidic residues; sequence HPPKVEEKKA.

Belongs to the actin-binding proteins ADF family. Twinfilin subfamily. Interacts with G-actin; ADP-actin form.

The protein localises to the cytoplasm. The protein resides in the cytoskeleton. It is found in the cell cortex. In terms of biological role, actin-binding protein involved in motile and morphological processes. Inhibits actin polymerization, likely by sequestering G-actin. This Dictyostelium discoideum (Social amoeba) protein is Twinfilin (twfA).